We begin with the raw amino-acid sequence, 256 residues long: uncharacterized protein (256 aa).

This is an uncharacterized protein from Saccharomyces cerevisiae (strain ATCC 204508 / S288c) (Baker's yeast).